Reading from the N-terminus, the 256-residue chain is Protein US2 homolog (256 aa).

Disordered regions lie at residues 100–120 (TRRP…SPPP), 167–186 (STAA…RRRP), and 236–256 (VRRR…CTIS). The span at 167–180 (STAAGAPGAPTGAR) shows a compositional bias: low complexity. Over residues 245–256 (NGRERAPRCTIS) the composition is skewed to basic and acidic residues.

Belongs to the herpesviridae US2 family.

The polypeptide is Protein US2 homolog (28K) (Sus scrofa (Pig)).